We begin with the raw amino-acid sequence, 84 residues long: Delta-stichotoxin-Sgt3a (84 aa).

Residues 1-19 (MAYLKIVLVALMLVVAVSA) form the signal peptide. A propeptide spanning residues 20–33 (MRLSDQEDQDISVA) is cleaved from the precursor. 3 disulfide bridges follow: cysteine 38-cysteine 78, cysteine 40-cysteine 68, and cysteine 61-cysteine 79. Glycine 84 is a propeptide.

This sequence belongs to the sea anemone sodium channel inhibitory toxin family. Type II subfamily.

Its subcellular location is the secreted. It is found in the nematocyst. Binds specifically to voltage-gated sodium channels (Nav), thereby delaying their inactivation during signal transduction. This Stichodactyla gigantea (Giant carpet anemone) protein is Delta-stichotoxin-Sgt3a.